A 153-amino-acid polypeptide reads, in one-letter code: Transthyretin (153 aa).

A signal peptide spans 1 to 24; it reads MAYYNTLALLTIFIFSGAFHRAQG. Cys-33 carries the sulfocysteine modification. Residues Lys-38, Glu-77, and Ser-140 each coordinate L-thyroxine.

Belongs to the transthyretin family. Homotetramer. Dimer of dimers. In the homotetramer, subunits assemble around a central channel that can accommodate two ligand molecules. Interacts with RBP4. Post-translationally, sulfonation of the reactive cysteine Cys-33 enhances the stability of the native conformation of TTR, avoiding misassembly of the protein leading to amyloid formation. Detected in plasma (at protein level). Expressed during metamorphosis in tadpole liver but not in tadpole brain, nor adult liver.

It is found in the secreted. Its function is as follows. Thyroid hormone-binding protein, with a much higher binding affinity for triiodothyronine (T3) than for thyroxine (T4). Probably transports triiodothyronine from the bloodstream to the brain. This Aquarana catesbeiana (American bullfrog) protein is Transthyretin.